A 371-amino-acid polypeptide reads, in one-letter code: uncharacterized protein (371 aa).

Residues 287–323 are a coiled coil; that stretch reads EVVTALDRYRQHLRETRERLEEKQGKLLEELKGYESM.

This is an uncharacterized protein from Aspergillus fumigatus (strain ATCC MYA-4609 / CBS 101355 / FGSC A1100 / Af293) (Neosartorya fumigata).